A 558-amino-acid chain; its full sequence is Membrane protein insertase YidC (558 aa).

5 helical membrane-spanning segments follow: residues 3–23, 364–384, 438–458, 477–497, and 508–528; these read IKRTVLWVIFFMSAVMLFDNW, FVGNWGWAIVLLTLLIKAVFF, LPVVIQIPVFISLYWVLLASV, PYFILPVLMAVSMFVQTKLNP, and MMFMPIAFSVMFFFFPAGLVL.

The protein belongs to the OXA1/ALB3/YidC family. Type 1 subfamily. In terms of assembly, interacts with the Sec translocase complex via SecD. Specifically interacts with transmembrane segments of nascent integral membrane proteins during membrane integration.

The protein resides in the cell inner membrane. Required for the insertion and/or proper folding and/or complex formation of integral membrane proteins into the membrane. Involved in integration of membrane proteins that insert both dependently and independently of the Sec translocase complex, as well as at least some lipoproteins. Aids folding of multispanning membrane proteins. This Burkholderia mallei (strain NCTC 10247) protein is Membrane protein insertase YidC.